A 244-amino-acid chain; its full sequence is L-xylulose reductase (244 aa).

Met-1 carries the N-acetylmethionine modification. Residue 11 to 39 participates in NADP(+) binding; it reads LVTGAGKGIGRSIVKALHAAGARVVAVSR. An Omega-N-methylarginine modification is found at Arg-21. Position 46 is a phosphoserine (Ser-46). Substrate is bound at residue Ser-136. Residue Tyr-149 is the Proton acceptor of the active site. Lys-153 is an active-site residue.

The protein belongs to the short-chain dehydrogenases/reductases (SDR) family. Homotetramer.

The protein localises to the membrane. The catalysed reaction is xylitol + NADP(+) = L-xylulose + NADPH + H(+). Functionally, catalyzes the NADPH-dependent reduction of several pentoses, tetroses, trioses, alpha-dicarbonyl compounds and L-xylulose. Participates in the uronate cycle of glucose metabolism. May play a role in the water absorption and cellular osmoregulation in the proximal renal tubules by producing xylitol, an osmolyte, thereby preventing osmolytic stress from occurring in the renal tubules. This Bos taurus (Bovine) protein is L-xylulose reductase (DCXR).